Reading from the N-terminus, the 268-residue chain is Glucosamine-6-phosphate deaminase (268 aa).

Asp-72 acts as the Proton acceptor; for enolization step in catalysis. Asp-141 (for ring-opening step) is an active-site residue. His-143 (proton acceptor; for ring-opening step) is an active-site residue. Glu-148 functions as the For ring-opening step in the catalytic mechanism.

Belongs to the glucosamine/galactosamine-6-phosphate isomerase family. NagB subfamily. In terms of assembly, homohexamer.

It catalyses the reaction alpha-D-glucosamine 6-phosphate + H2O = beta-D-fructose 6-phosphate + NH4(+). The protein operates within amino-sugar metabolism; N-acetylneuraminate degradation; D-fructose 6-phosphate from N-acetylneuraminate: step 5/5. Its activity is regulated as follows. Allosterically activated by N-acetylglucosamine 6-phosphate (GlcNAc6P). In terms of biological role, catalyzes the reversible isomerization-deamination of glucosamine 6-phosphate (GlcN6P) to form fructose 6-phosphate (Fru6P) and ammonium ion. This is Glucosamine-6-phosphate deaminase from Histophilus somni (strain 2336) (Haemophilus somnus).